The chain runs to 485 residues: N-succinylglutamate 5-semialdehyde dehydrogenase (485 aa).

Gly220 to Gly225 provides a ligand contact to NAD(+). Catalysis depends on residues Glu243 and Cys278.

Belongs to the aldehyde dehydrogenase family. AstD subfamily.

The enzyme catalyses N-succinyl-L-glutamate 5-semialdehyde + NAD(+) + H2O = N-succinyl-L-glutamate + NADH + 2 H(+). It participates in amino-acid degradation; L-arginine degradation via AST pathway; L-glutamate and succinate from L-arginine: step 4/5. In terms of biological role, catalyzes the NAD-dependent reduction of succinylglutamate semialdehyde into succinylglutamate. In Vibrio campbellii (strain ATCC BAA-1116), this protein is N-succinylglutamate 5-semialdehyde dehydrogenase.